A 128-amino-acid chain; its full sequence is Global transcriptional regulator Spx 1 (128 aa).

A disulfide bridge links Cys10 with Cys13.

The protein belongs to the ArsC family. Spx subfamily. Interacts with the C-terminal domain of the alpha subunit of the RNAP.

The protein resides in the cytoplasm. Functionally, global transcriptional regulator that plays a key role in stress response and exerts either positive or negative regulation of genes. Acts by interacting with the C-terminal domain of the alpha subunit of the RNA polymerase (RNAP). This interaction can enhance binding of RNAP to the promoter region of target genes and stimulate their transcription, or block interaction of RNAP with activator. In Lactococcus lactis subsp. lactis (strain IL1403) (Streptococcus lactis), this protein is Global transcriptional regulator Spx 1.